A 164-amino-acid chain; its full sequence is Hoefavidin (164 aa).

The N-terminal stretch at 1 to 22 (MNKVLAIVLTITVAGFAQTAFA) is a signal peptide. The region spanning 32–155 (KLLAGASNWV…GQDDFMQSVA (124 aa)) is the Avidin-like domain. The biotin site is built by N42, S46, Y68, N70, and G76. A disulfide bond links C77 and C108. S110, T112, and D148 together coordinate biotin.

Belongs to the avidin/streptavidin family. In terms of assembly, exhibits a dynamic oligomeric assembly: the apo form exits as homooctamers, which dissociate into homodimers upon biotin binding. The X-ray structure of the intact hoefavidin reveals unique crystal packing generated by an octameric cylindrical structure wherein the C-terminal segments of each monomer are introduced into the entrance of the biotin-binding site of an adjacent non-canonical monomer.

Its subcellular location is the secreted. The exact role played by hoefavidin in the host organism is still obscure. Forms a strong non-covalent complex with biotin and 2-iminobiotin. This is Hoefavidin from Hoeflea phototrophica (strain DSM 17068 / NCIMB 14078 / DFL-43).